A 128-amino-acid polypeptide reads, in one-letter code: MGIQGGSVLFGLLLVLAVFCHSGHSLQCYNCPNPTADCKTAVNCSSDFDACLITKAGLQVYNKCWKFEHCNFNDVTTRLRENELTYYCCKKDLCNFNEQLENGGTSLSEKTVLLLVTPFLAAAWSLHP.

A signal peptide spans 1–25; sequence MGIQGGSVLFGLLLVLAVFCHSGHS. Residues 26-108 enclose the UPAR/Ly6 domain; the sequence is LQCYNCPNPT…QLENGGTSLS (83 aa). 3 cysteine pairs are disulfide-bonded: cysteine 28/cysteine 51, cysteine 31/cysteine 38, and cysteine 44/cysteine 64. A glycan (N-linked (GlcNAc...) asparagine) is linked at asparagine 43. N-linked (Glc) (glycation) lysine glycosylation is present at lysine 66. Intrachain disulfides connect cysteine 70–cysteine 88 and cysteine 89–cysteine 94. Threonine 76 and threonine 77 each carry an O-linked (GalNAc...) threonine glycan. Asparagine 102 carries the GPI-anchor amidated asparagine lipid modification. Positions 103-128 are cleaved as a propeptide — removed in mature form; it reads GGTSLSEKTVLLLVTPFLAAAWSLHP.

In terms of assembly, interacts with T-cell surface antigen CD2. N- and O-glycosylated. The N-glycosylation mainly consists of a family of biantennary complex-type structures with and without lactosamine extensions and outer arm fucose residues. Also significant amounts of triantennary complexes (22%). Variable sialylation also present in the Asn-43 oligosaccharide. The predominant O-glycans are mono-sialylated forms of the disaccharide, Gal-beta-1,3GalNAc, and their sites of attachment are probably on Thr-76 and Thr-77. The GPI-anchor of soluble urinary CD59 has no inositol-associated phospholipid, but is composed of seven different GPI-anchor variants of one or more monosaccharide units. Major variants contain sialic acid, mannose and glucosamine. Sialic acid linked to an N-acetylhexosamine-galactose arm is present in two variants. In terms of processing, glycated. Glycation is found in diabetic subjects, but only at minimal levels in nondiabetic subjects. Glycated CD59 lacks MAC-inhibitory function and confers to vascular complications of diabetes.

The protein localises to the cell membrane. The protein resides in the secreted. Potent inhibitor of the complement membrane attack complex (MAC) action, which protects human cells from damage during complement activation. Acts by binding to the beta-haipins of C8 (C8A and C8B) components of the assembling MAC, forming an intermolecular beta-sheet that prevents incorporation of the multiple copies of C9 required for complete formation of the osmolytic pore. Functionally, the soluble form from urine retains its specific complement binding activity, but exhibits greatly reduced ability to inhibit complement membrane attack complex (MAC) assembly on cell membranes. The polypeptide is CD59 glycoprotein (Homo sapiens (Human)).